Reading from the N-terminus, the 422-residue chain is Protein IQ-DOMAIN 5 (422 aa).

Residues 23–30 (SKKDENVK) carry the Nuclear localization signal motif. IQ domains are found at residues 87-115 (ENRA…GLVR), 116-138 (LQAL…CMQA), and 139-164 (LVRV…TSQQ). The interval 137 to 151 (QALVRVQARVRARRV) is calmodulin-binding. A disordered region spans residues 269–422 (GENGMEQSEN…NSDPIKQRLA (154 aa)). Polar residues predominate over residues 273–308 (MEQSENVPKTQIKSVSKMPNTSNLVSGVSSQMTGPC). A compositionally biased stretch (low complexity) spans 310–327 (SDGDSSSPGISSSIPVVS). A compositionally biased stretch (basic and acidic residues) spans 355 to 371 (NPKERSREPNRSSKERL). The segment covering 373–387 (LPNSGKSLGSQSTKA) has biased composition (polar residues). Over residues 412-422 (RNSDPIKQRLA) the composition is skewed to basic and acidic residues.

It belongs to the IQD family. As to quaternary structure, binds to multiple calmodulin (CaM) in the presence of Ca(2+) and CaM-like proteins. In terms of tissue distribution, expressed mostly in vegetative tissues including older parts of the root, cotyledons, leaves and shoot apical meristems (SAM). Present at low levels in pollen, siliques and seeds.

The protein resides in the nucleus. It localises to the cytoplasm. It is found in the cytoskeleton. Its subcellular location is the spindle. The protein localises to the phragmoplast. Functionally, may be involved in cooperative interactions with calmodulins or calmodulin-like proteins. Recruits calmodulin (CaM) calcium sensor proteins to cortical microtubule arrays, thus being a potential scaffold in cellular signaling and trafficking. Binds to microtubules (MTs) and promotes MT assembly and dynamics to modulate pavement cell (PC) morphogenesis via cellulose deposition-dependent anisotropic cell expansion triggered by cellulose synthase complexes (CSCs). May associate with nucleic acids and regulate gene expression at the transcriptional or post-transcriptional level. The polypeptide is Protein IQ-DOMAIN 5 (Arabidopsis thaliana (Mouse-ear cress)).